Here is a 174-residue protein sequence, read N- to C-terminus: Large ribosomal subunit protein uL10 (174 aa).

Belongs to the universal ribosomal protein uL10 family. In terms of assembly, part of the ribosomal stalk of the 50S ribosomal subunit. The N-terminus interacts with L11 and the large rRNA to form the base of the stalk. The C-terminus forms an elongated spine to which L12 dimers bind in a sequential fashion forming a multimeric L10(L12)X complex.

Forms part of the ribosomal stalk, playing a central role in the interaction of the ribosome with GTP-bound translation factors. The sequence is that of Large ribosomal subunit protein uL10 from Desulfovibrio desulfuricans (strain ATCC 27774 / DSM 6949 / MB).